Reading from the N-terminus, the 551-residue chain is Adenylosuccinate synthetase (551 aa).

Residues 131 to 137 and 159 to 161 contribute to the GTP site; these read GDEGKGK and GHT. D132 functions as the Proton acceptor in the catalytic mechanism. D132 and G159 together coordinate Mg(2+). IMP-binding positions include 132–135, 157–160, T248, R262, N339, T354, and R418; these read DEGK and NAGH. H160 functions as the Proton donor in the catalytic mechanism. 414–420 contacts substrate; the sequence is TTTGRAR. GTP contacts are provided by residues R420, 446 to 448, and 528 to 530; these read KLD and GVG.

The protein belongs to the adenylosuccinate synthetase family. As to quaternary structure, homodimer. Requires Mg(2+) as cofactor.

Its subcellular location is the cytoplasm. The catalysed reaction is IMP + L-aspartate + GTP = N(6)-(1,2-dicarboxyethyl)-AMP + GDP + phosphate + 2 H(+). The protein operates within purine metabolism; AMP biosynthesis via de novo pathway; AMP from IMP: step 1/2. In terms of biological role, plays an important role in the de novo pathway and in the salvage pathway of purine nucleotide biosynthesis. Catalyzes the first committed step in the biosynthesis of AMP from IMP. The polypeptide is Adenylosuccinate synthetase (Phytophthora infestans (strain T30-4) (Potato late blight agent)).